The primary structure comprises 581 residues: Interleukin-22 receptor subunit alpha-1 (581 aa).

The first 15 residues, 1–15 (MRTLLTILAAGSLLA), serve as a signal peptide directing secretion. Residues 16–228 (HITEDTSDLL…VKTLPDRTWT (213 aa)) are Extracellular-facing. 2 Fibronectin type-III domains span residues 18–115 (TEDT…RFSS) and 141–221 (PTYT…RVKT). A disulfide bridge connects residues Cys71 and Cys79. The N-linked (GlcNAc...) asparagine glycan is linked to Asn80. A disulfide bond links Cys128 and Cys217. Residues 229–249 (YSFSGAFLFSLGFLVAGLCYL) form a helical membrane-spanning segment. Residues 250 to 581 (SYRYITKPPP…GLALTVQWES (332 aa)) are Cytoplasmic-facing. 2 disordered regions span residues 354-493 (QAAP…SSLK) and 539-563 (PSDE…LESP). A compositionally biased stretch (polar residues) spans 378–389 (TPQAVSETQLPS). Residues Ser410 and Ser414 each carry the phosphoserine modification. Residues 440 to 449 (CSPTGLSLQE) are compositionally biased toward polar residues.

Belongs to the type II cytokine receptor family. As to quaternary structure, heterodimer with IL10RB and with IL20RB. Interacts with FBXW12; the interaction promotes ubiquitination of IL22RA1. Ubiquitinated.

It localises to the cell membrane. Component of the receptor for IL20, IL22 and IL24. Component of IL22 receptor formed by IL22RA1 and IL10RB enabling IL22 signaling via JAK/STAT pathways. IL22 also induces activation of MAPK1/MAPK3 and Akt kinases pathways. Component of one of the receptor for IL20 and IL24 formed by IL22RA1 and IL20RB also signaling through STATs activation. Mediates IL24 antiangiogenic activity as well as IL24 inhibitory effect on endothelial cell tube formation and differentiation. The polypeptide is Interleukin-22 receptor subunit alpha-1 (IL22RA1) (Bos taurus (Bovine)).